The chain runs to 75 residues: ATP synthase subunit c (75 aa).

2 helical membrane-spanning segments follow: residues 9–29 and 54–74; these read IGAG…GIIF and FALA…ILFA.

The protein belongs to the ATPase C chain family. F-type ATPases have 2 components, F(1) - the catalytic core - and F(0) - the membrane proton channel. F(1) has five subunits: alpha(3), beta(3), gamma(1), delta(1), epsilon(1). F(0) has three main subunits: a(1), b(2) and c(10-14). The alpha and beta chains form an alternating ring which encloses part of the gamma chain. F(1) is attached to F(0) by a central stalk formed by the gamma and epsilon chains, while a peripheral stalk is formed by the delta and b chains.

It localises to the cell inner membrane. In terms of biological role, f(1)F(0) ATP synthase produces ATP from ADP in the presence of a proton or sodium gradient. F-type ATPases consist of two structural domains, F(1) containing the extramembraneous catalytic core and F(0) containing the membrane proton channel, linked together by a central stalk and a peripheral stalk. During catalysis, ATP synthesis in the catalytic domain of F(1) is coupled via a rotary mechanism of the central stalk subunits to proton translocation. Key component of the F(0) channel; it plays a direct role in translocation across the membrane. A homomeric c-ring of between 10-14 subunits forms the central stalk rotor element with the F(1) delta and epsilon subunits. This chain is ATP synthase subunit c, found in Pelagibacter ubique (strain HTCC1062).